The sequence spans 204 residues: Guanylate kinase (204 aa).

The 179-residue stretch at 6–184 folds into the Guanylate kinase-like domain; sequence GLLIVLSGPA…AVDRIKAIVT (179 aa). 13 to 20 is an ATP binding site; sequence GPAGVGKG.

Belongs to the guanylate kinase family.

The protein localises to the cytoplasm. The enzyme catalyses GMP + ATP = GDP + ADP. Its function is as follows. Essential for recycling GMP and indirectly, cGMP. This Halalkalibacterium halodurans (strain ATCC BAA-125 / DSM 18197 / FERM 7344 / JCM 9153 / C-125) (Bacillus halodurans) protein is Guanylate kinase (gmk).